The primary structure comprises 114 residues: MASYKVNIPAGPLWSNAEAQQVGPKIAAAHQGNFTGQWTTVVESAMSVVEVELQVENTGIHEFKTDVLAGPLWSNDEAQKLGPQIAASYGAEFTGQWRTIVEGVMSVIQIKYTF.

Copy 1 of the repeat occupies 2–55 (ASYKVNIPAGPLWSNAEAQQVGPKIAAAHQGNFTGQWTTVVESAMSVVEVELQV). A carbohydrate contacts are provided by residues 12–16 (PLWSN), Gln20, and 36–44 (GQWTTVVES). The tract at residues 56–60 (ENTGI) is linker. Residues 61-114 (HEFKTDVLAGPLWSNDEAQKLGPQIAASYGAEFTGQWRTIVEGVMSVIQIKYTF) form repeat 2. Residues 71-75 (PLWSN), Gln79, and 95-103 (GQWRTIVEG) each bind a carbohydrate.

As to quaternary structure, homodimer.

The protein localises to the cytoplasm. Carbohydrate-binding protein that binds oligomannosides such as Man(6)GlcNAc(2) with sub-micromolar affinities. The specificity of MVL is unique in that its minimal target comprises the Man-alpha-(1-&gt;6)-Man-beta-(1-&gt;4)-GlcNAc-beta-(1-&gt;4)-GlcNAc tetrasaccharide core (Man(2)A) found in N-linked oligomannosides. Displays hemagglutininating activity on rabbit, horse and hen erythrocytes. This activity is inhibited by yeast mannan. Does not bind mono- and disaccharides. Inhibits HIV-1 envelope-mediated cell fusion at nanomolar concentrations through carbohydrate-mediated interactions with high-mannose residues on the surface of the HIV envelope glycoprotein gp120. In terms of biological role, unexpectedly for a lectin, one of the 2 oligomannose binding sites of MVL can catalyze the cleavage of chitin fragments (such as chitotriose, i.e. GlcNAc(3) or GlcNAc-beta-(1-&gt;4)-GlcNAcbeta-(1-&gt;4)-GlcNAc, and chitotetraose, i.e. GlcNAc(4)) to GlcNAc. This weak beta-1,4-glycosidase activity is restricted to the C-terminal carbohydrate-binding site. Does not cleave Man(3)GlcNAc(2) or the tetrasaccharide Man(2)A. In Microcystis viridis (Polycystis viridis), this protein is Lectin MVL (mvl).